The primary structure comprises 463 residues: L-seryl-tRNA(Sec) selenium transferase (463 aa).

N6-(pyridoxal phosphate)lysine is present on Lys295.

It belongs to the SelA family. In terms of assembly, homodecamer; pentamer of dimers. Binds only one seryl-tRNA(Sec) per dimer. The cofactor is pyridoxal 5'-phosphate.

Its subcellular location is the cytoplasm. It catalyses the reaction L-seryl-tRNA(Sec) + selenophosphate + H(+) = L-selenocysteinyl-tRNA(Sec) + phosphate. It participates in aminoacyl-tRNA biosynthesis; selenocysteinyl-tRNA(Sec) biosynthesis; selenocysteinyl-tRNA(Sec) from L-seryl-tRNA(Sec) (bacterial route): step 1/1. In terms of biological role, converts seryl-tRNA(Sec) to selenocysteinyl-tRNA(Sec) required for selenoprotein biosynthesis. The chain is L-seryl-tRNA(Sec) selenium transferase from Serratia proteamaculans (strain 568).